The chain runs to 293 residues: Beta-lactamase (293 aa).

Residues 1-27 (MRFTATVLSRVATGLALGLSMATASLA) form the signal peptide. The Acyl-ester intermediate role is filled by Ser74. Residue 238–240 (KSG) coordinates substrate.

It belongs to the class-A beta-lactamase family.

It localises to the periplasm. It catalyses the reaction a beta-lactam + H2O = a substituted beta-amino acid. Hydrolyzes beta-lactams antibiotics. Rates of hydrolysis relative to benzylpenicillin =100: ampicillin = 27, carbenicillin = 25, cloxacillin = 0, cephaloridine = 4. This Rhodobacter capsulatus (Rhodopseudomonas capsulata) protein is Beta-lactamase.